The primary structure comprises 254 residues: Probable glutathione transferase omega-2 (254 aa).

One can recognise a GST N-terminal domain in the interval 25–105; the sequence is GTIRIYNMRY…YLDDIYPEPR (81 aa). The active-site Nucleophile is Cys-35. Glutathione-binding positions include Lys-62, Val-75, and 89–90; that span reads ES. The GST C-terminal domain maps to 110–239; sequence DHYEKVQQKL…SQPTETAVEF (130 aa).

Belongs to the GST superfamily. Omega family.

The enzyme catalyses RX + glutathione = an S-substituted glutathione + a halide anion + H(+). It carries out the reaction L-dehydroascorbate + 2 glutathione = glutathione disulfide + L-ascorbate. The catalysed reaction is methylarsonate + 2 glutathione + H(+) = methylarsonous acid + glutathione disulfide + H2O. Exhibits glutathione-dependent thiol transferase activity. Has dehydroascorbate reductase activity and may contribute to the recycling of ascorbic acid. Participates in the biotransformation of inorganic arsenic and reduces monomethylarsonic acid (MMA). This is Probable glutathione transferase omega-2 (gsto-2) from Caenorhabditis elegans.